Here is a 279-residue protein sequence, read N- to C-terminus: tRNA (guanine-N(1)-)-methyltransferase (279 aa).

Residues Gly117 and 141–146 (LGDYVL) contribute to the S-adenosyl-L-methionine site. Residues 256–279 (WTPDGSGFRAGGDPVADSSDTNEP) form a disordered region.

This sequence belongs to the RNA methyltransferase TrmD family. Homodimer.

It localises to the cytoplasm. It catalyses the reaction guanosine(37) in tRNA + S-adenosyl-L-methionine = N(1)-methylguanosine(37) in tRNA + S-adenosyl-L-homocysteine + H(+). Specifically methylates guanosine-37 in various tRNAs. The polypeptide is tRNA (guanine-N(1)-)-methyltransferase (Kineococcus radiotolerans (strain ATCC BAA-149 / DSM 14245 / SRS30216)).